A 605-amino-acid polypeptide reads, in one-letter code: Beta-conglycinin alpha subunit 1 (605 aa).

A signal peptide spans Met-1–Ser-22. Residues Phe-23–Lys-62 constitute a propeptide that is removed on maturation. The interval Lys-65–Pro-195 is disordered. A compositionally biased stretch (basic and acidic residues) spans Pro-111 to Gly-136. Acidic residues-rich tracts occupy residues Ser-137–Asp-149 and Glu-169–Asp-184. Cupin type-1 domains are found at residues Phe-196–Asn-354 and Phe-406–Glu-567. Residues Asn-261 and Asn-517 are each glycosylated (N-linked (GlcNAc...) asparagine).

This sequence belongs to the 7S seed storage protein family. The alpha-, alpha'-, and beta-subunits associate in various combinations to form trimeric proteins.

The protein localises to the vacuole. It localises to the aleurone grain. It is found in the endoplasmic reticulum. The protein resides in the protein storage vacuole. Seed storage protein. Accumulates during seed development and is hydrolyzed after germination to provide a carbon and nitrogen source for the developing seedling. This Glycine max (Soybean) protein is Beta-conglycinin alpha subunit 1.